Here is a 160-residue protein sequence, read N- to C-terminus: Single-stranded DNA-binding protein (160 aa).

In terms of biological role, binds to single-stranded DNA (ssDNA). Has a regulatory effect on phage DNA metabolism and transcription of early genes. The chain is Single-stranded DNA-binding protein (XII) from Enterobacteria phage PRD1 (Bacteriophage PRD1).